The following is a 416-amino-acid chain: Adenylosuccinate synthetase (416 aa).

GTP-binding positions include 13 to 19 and 41 to 43; these read GDEGKGK and GHT. Catalysis depends on aspartate 14, which acts as the Proton acceptor. The Mg(2+) site is built by aspartate 14 and glycine 41. Residues 14–17, 39–42, threonine 126, arginine 140, glutamine 220, threonine 235, and arginine 299 each bind IMP; these read DEGK and NAGH. Histidine 42 (proton donor) is an active-site residue. 295–301 serves as a coordination point for substrate; sequence TTTGRRR. GTP contacts are provided by residues arginine 301, 327–329, and 405–407; these read KLD and STS.

The protein belongs to the adenylosuccinate synthetase family. As to quaternary structure, homodimer. Mg(2+) serves as cofactor.

The protein resides in the cytoplasm. The enzyme catalyses IMP + L-aspartate + GTP = N(6)-(1,2-dicarboxyethyl)-AMP + GDP + phosphate + 2 H(+). It participates in purine metabolism; AMP biosynthesis via de novo pathway; AMP from IMP: step 1/2. Its function is as follows. Plays an important role in the de novo pathway of purine nucleotide biosynthesis. Catalyzes the first committed step in the biosynthesis of AMP from IMP. The protein is Adenylosuccinate synthetase of Campylobacter curvus (strain 525.92).